Reading from the N-terminus, the 174-residue chain is uncharacterized protein (174 aa).

Residues 78-97 (TFGRNIKTPDISNPTRARNE) are disordered.

It to yeast YMR295c.

This is an uncharacterized protein from Saccharomyces cerevisiae (strain ATCC 204508 / S288c) (Baker's yeast).